We begin with the raw amino-acid sequence, 784 residues long: LPS-assembly protein LptD (784 aa).

A signal peptide spans 1–24 (MKKRIPTLLATMIATALYSQQGLA). Cystine bridges form between cysteine 31-cysteine 724 and cysteine 173-cysteine 725.

Belongs to the LptD family. In terms of assembly, component of the lipopolysaccharide transport and assembly complex. Interacts with LptE and LptA. In terms of processing, contains two intramolecular disulfide bonds.

Its subcellular location is the cell outer membrane. In terms of biological role, together with LptE, is involved in the assembly of lipopolysaccharide (LPS) at the surface of the outer membrane. The protein is LPS-assembly protein LptD of Shigella flexneri serotype 5b (strain 8401).